The following is a 331-amino-acid chain: NADH-quinone oxidoreductase subunit H 2 (331 aa).

Transmembrane regions (helical) follow at residues 6 to 26 (AGFL…LLVA), 79 to 99 (IFML…AVIP), 120 to 140 (VGLL…ALGG), 155 to 175 (GAAQ…PVVM), 193 to 213 (PFIL…MAEI), 242 to 262 (LFFL…AVLF), 271 to 291 (LPPV…MIWV), and 310 to 330 (VLIP…LWMG).

This sequence belongs to the complex I subunit 1 family. NDH-1 is composed of 14 different subunits. Subunits NuoA, H, J, K, L, M, N constitute the membrane sector of the complex.

It is found in the cell inner membrane. The enzyme catalyses a quinone + NADH + 5 H(+)(in) = a quinol + NAD(+) + 4 H(+)(out). In terms of biological role, NDH-1 shuttles electrons from NADH, via FMN and iron-sulfur (Fe-S) centers, to quinones in the respiratory chain. The immediate electron acceptor for the enzyme in this species is believed to be ubiquinone. Couples the redox reaction to proton translocation (for every two electrons transferred, four hydrogen ions are translocated across the cytoplasmic membrane), and thus conserves the redox energy in a proton gradient. This subunit may bind ubiquinone. This chain is NADH-quinone oxidoreductase subunit H 2, found in Syntrophobacter fumaroxidans (strain DSM 10017 / MPOB).